Here is a 165-residue protein sequence, read N- to C-terminus: Crossover junction endodeoxyribonuclease RuvC (165 aa).

Active-site residues include aspartate 6, glutamate 67, and aspartate 142. Aspartate 6, glutamate 67, and aspartate 142 together coordinate Mg(2+).

This sequence belongs to the RuvC family. In terms of assembly, homodimer which binds Holliday junction (HJ) DNA. The HJ becomes 2-fold symmetrical on binding to RuvC with unstacked arms; it has a different conformation from HJ DNA in complex with RuvA. In the full resolvosome a probable DNA-RuvA(4)-RuvB(12)-RuvC(2) complex forms which resolves the HJ. Mg(2+) is required as a cofactor.

The protein localises to the cytoplasm. The enzyme catalyses Endonucleolytic cleavage at a junction such as a reciprocal single-stranded crossover between two homologous DNA duplexes (Holliday junction).. In terms of biological role, the RuvA-RuvB-RuvC complex processes Holliday junction (HJ) DNA during genetic recombination and DNA repair. Endonuclease that resolves HJ intermediates. Cleaves cruciform DNA by making single-stranded nicks across the HJ at symmetrical positions within the homologous arms, yielding a 5'-phosphate and a 3'-hydroxyl group; requires a central core of homology in the junction. The consensus cleavage sequence is 5'-(A/T)TT(C/G)-3'. Cleavage occurs on the 3'-side of the TT dinucleotide at the point of strand exchange. HJ branch migration catalyzed by RuvA-RuvB allows RuvC to scan DNA until it finds its consensus sequence, where it cleaves and resolves the cruciform DNA. The sequence is that of Crossover junction endodeoxyribonuclease RuvC from Chlamydia abortus (strain DSM 27085 / S26/3) (Chlamydophila abortus).